The primary structure comprises 965 residues: Glycine dehydrogenase (decarboxylating) (965 aa).

Lys-711 is modified (N6-(pyridoxal phosphate)lysine).

This sequence belongs to the GcvP family. In terms of assembly, the glycine cleavage system is composed of four proteins: P, T, L and H. It depends on pyridoxal 5'-phosphate as a cofactor.

It catalyses the reaction N(6)-[(R)-lipoyl]-L-lysyl-[glycine-cleavage complex H protein] + glycine + H(+) = N(6)-[(R)-S(8)-aminomethyldihydrolipoyl]-L-lysyl-[glycine-cleavage complex H protein] + CO2. In terms of biological role, the glycine cleavage system catalyzes the degradation of glycine. The P protein binds the alpha-amino group of glycine through its pyridoxal phosphate cofactor; CO(2) is released and the remaining methylamine moiety is then transferred to the lipoamide cofactor of the H protein. This is Glycine dehydrogenase (decarboxylating) from Psychrobacter cryohalolentis (strain ATCC BAA-1226 / DSM 17306 / VKM B-2378 / K5).